The primary structure comprises 200 residues: FMN-dependent NADH:quinone oxidoreductase (200 aa).

FMN contacts are provided by residues Ser10 and 95 to 98; that span reads MYNF.

It belongs to the azoreductase type 1 family. As to quaternary structure, homodimer. The cofactor is FMN.

The enzyme catalyses 2 a quinone + NADH + H(+) = 2 a 1,4-benzosemiquinone + NAD(+). The catalysed reaction is N,N-dimethyl-1,4-phenylenediamine + anthranilate + 2 NAD(+) = 2-(4-dimethylaminophenyl)diazenylbenzoate + 2 NADH + 2 H(+). Quinone reductase that provides resistance to thiol-specific stress caused by electrophilic quinones. Functionally, also exhibits azoreductase activity. Catalyzes the reductive cleavage of the azo bond in aromatic azo compounds to the corresponding amines. In Alteromonas mediterranea (strain DSM 17117 / CIP 110805 / LMG 28347 / Deep ecotype), this protein is FMN-dependent NADH:quinone oxidoreductase.